Reading from the N-terminus, the 335-residue chain is Stearoyl-CoA desaturase 5 (335 aa).

Topologically, residues 1 to 54 are cytoplasmic; the sequence is MPGPAVDAEKVPFRSAKEEIRAGVGVEGSEGGGGGGGRERPGARGHRQDIVWRN. Residues 24–44 are disordered; sequence VGVEGSEGGGGGGGRERPGAR. Residues 25–36 show a composition bias toward gly residues; it reads GVEGSEGGGGGG. N54 is a substrate binding site. Residues 55–75 traverse the membrane as a helical segment; that stretch reads VFLMSLLHLAAVYSLVLIPKA. The Lumenal segment spans residues 76 to 77; it reads QP. A helical transmembrane segment spans residues 78–98; sequence LTLLWAYFCFLLTALGVTAGA. Residues H99 and H104 each contribute to the Fe cation site. The Histidine box-1 signature appears at 99–104; that stretch reads HRLWSH. Residues 99–198 are Cytoplasmic-facing; it reads HRLWSHRSYK…VVRFQRKYYK (100 aa). Residues N127, R134, and D135 each coordinate substrate. Positions 136, 139, and 140 each coordinate Fe cation. Residues 136–140 carry the Histidine box-2 motif; the sequence is HRVHH. Residues R167 and K168 each contribute to the substrate site. A helical membrane pass occupies residues 199-219; that stretch reads ITVVLMCFVVPTLVPWYIWGE. Topologically, residues 220–227 are lumenal; the sequence is SLWNSYFL. A helical transmembrane segment spans residues 228-247; sequence ASILRYTISLNVTWLVNSVA. Substrate is bound at residue W241. Fe cation contacts are provided by H248, H277, H280, and H281. At 248 to 335 the chain is on the cytoplasmic side; sequence HMYGNRPYDK…RKARTGDGSA (88 aa). The Histidine box-3 signature appears at 277 to 281; sequence HNYHH.

It belongs to the fatty acid desaturase type 1 family. In terms of assembly, may self-associate and form homodimers. Fe(2+) is required as a cofactor. Detected in brain.

It is found in the endoplasmic reticulum membrane. The enzyme catalyses octadecanoyl-CoA + 2 Fe(II)-[cytochrome b5] + O2 + 2 H(+) = (9Z)-octadecenoyl-CoA + 2 Fe(III)-[cytochrome b5] + 2 H2O. The catalysed reaction is hexadecanoyl-CoA + 2 Fe(II)-[cytochrome b5] + O2 + 2 H(+) = (9Z)-hexadecenoyl-CoA + 2 Fe(III)-[cytochrome b5] + 2 H2O. Functionally, stearoyl-CoA desaturase that utilizes O(2) and electrons from reduced cytochrome b5 to introduce the first double bond into saturated fatty acyl-CoA substrates. Catalyzes the insertion of a cis double bond at the delta-9 position into fatty acyl-CoA substrates including palmitoyl-CoA and stearoyl-CoA. Gives rise to a mixture of 16:1 and 18:1 unsaturated fatty acids. Involved in neuronal cell proliferation and differentiation through down-regulation of EGFR/AKT/MAPK and Wnt signaling pathways. The chain is Stearoyl-CoA desaturase 5 (SCD5) from Bos taurus (Bovine).